Here is a 146-residue protein sequence, read N- to C-terminus: Snaclec agkicetin-C subunit beta (146 aa).

Positions 1–23 are cleaved as a signal peptide; sequence MGRFIFVSFGLLVVFLSLSGTGA. 3 disulfide bridges follow: cysteine 25–cysteine 36, cysteine 53–cysteine 142, and cysteine 119–cysteine 134. Residues 32-143 form the C-type lectin domain; sequence YEGNCYLVVK…CSRTQPFVCK (112 aa).

Belongs to the snaclec family. As to quaternary structure, heterodimer of subunits alpha and beta; disulfide-linked. Expressed by the venom gland.

Its subcellular location is the secreted. Functionally, is a potent glycoprotein Ibalpha (GP1BA) antagonist. Concentration-dependently inhibits botrocetin-, ristocetin- and low dose thrombin-induced platelet aggregation. Inhibits platelet adhesion only through inhibiting the vWF interaction with GP1BA, but has minimal effect on other platelet receptors, such as alpha-IIb/beta-3 (ITGA2B/ITGB3) or alpha-2/beta-1 (ITGA2/ITGB1). Causes an instant severe thrombocytopenia in rats and is not lethal to mice. This Deinagkistrodon acutus (Hundred-pace snake) protein is Snaclec agkicetin-C subunit beta.